The sequence spans 555 residues: Hydroxylamine reductase (555 aa).

Cys3, Cys6, Cys18, and Cys25 together coordinate [4Fe-4S] cluster. Hybrid [4Fe-2O-2S] cluster contacts are provided by His252, Glu276, Cys320, Cys407, Cys435, Cys460, Glu494, and Lys496. Cys407 carries the post-translational modification Cysteine persulfide.

Belongs to the HCP family. Requires [4Fe-4S] cluster as cofactor. Hybrid [4Fe-2O-2S] cluster is required as a cofactor.

The protein resides in the cytoplasm. The enzyme catalyses A + NH4(+) + H2O = hydroxylamine + AH2 + H(+). Functionally, catalyzes the reduction of hydroxylamine to form NH(3) and H(2)O. This Burkholderia ambifaria (strain MC40-6) protein is Hydroxylamine reductase.